A 469-amino-acid chain; its full sequence is MKKLPEDFIFGGATAAYQAEGATQTDGKGRVAWDTYLEENYWYTAEPASDFYNKYPIDLELSEKFGVNGIRISIAWSRIFPKGYGEVNPKGVEYYHNLFKECHRRHVEPFVTLHHFDTPETLHSDGDFLNRKTIEYFVEYAKFCFEEFEEVNYWTTFNEIGPIGDGQYLVGKFPPGIKYDFAKVFQSHHNMMVAHAKAVKLFKDNGYSGEVGVVHALPTKYPYDPTNPEDVRAAELEDIIHNKFILDATYLGKYSRETMEGVQHILSVNGGKLDIPEEDYKVLEAAKDLNDFLGINYYMSDWMRGYDGESEITHNATGDKGGSKYQLKGVGQREFDVDVPRTDWDWMIYPKGLYDQIMRVVKDYPNYHKIYITENGLGYKDQFDEERKTVDDDARIDYVKKHLEVISDAIRDGANVKGYFIWSLMDVFSWSNGYEKRYGLFYVDFETQERYPKKSAYWYKELAESKEIK.

The D-galactose 6-phosphate site is built by glutamine 18, histidine 115, asparagine 158, glutamate 159, and asparagine 296. Glutamate 159 serves as the catalytic Proton donor. The active-site Nucleophile is glutamate 374. 4 residues coordinate D-galactose 6-phosphate: serine 429, tryptophan 430, lysine 436, and tyrosine 438.

This sequence belongs to the glycosyl hydrolase 1 family.

The catalysed reaction is a 6-phospho-beta-D-galactoside + H2O = D-galactose 6-phosphate + an alcohol. It participates in carbohydrate metabolism; lactose degradation; D-galactose 6-phosphate and beta-D-glucose from lactose 6-phosphate: step 1/1. This Staphylococcus haemolyticus (strain JCSC1435) protein is 6-phospho-beta-galactosidase.